The following is a 122-amino-acid chain: EPIDERMAL PATTERNING FACTOR-like protein 1 (122 aa).

The N-terminal stretch at 1–26 (MFAIYKSTLLLLPLILILLITPQVSS) is a signal peptide. Cystine bridges form between cysteine 55–cysteine 113, cysteine 59–cysteine 65, and cysteine 62–cysteine 115.

Belongs to the plant cysteine rich small secretory peptide family. Epidermal patterning factor subfamily.

The protein resides in the secreted. In terms of biological role, controls stomatal patterning. The sequence is that of EPIDERMAL PATTERNING FACTOR-like protein 1 from Arabidopsis thaliana (Mouse-ear cress).